Consider the following 476-residue polypeptide: Bifunctional protein GlmU (476 aa).

Residues 1 to 232 (MGDLAAIILA…PVEVMGVNDR (232 aa)) are pyrophosphorylase. UDP-N-acetyl-alpha-D-glucosamine-binding positions include 9–12 (LAAG), K23, Q75, and 80–81 (GT). D105 is a Mg(2+) binding site. UDP-N-acetyl-alpha-D-glucosamine contacts are provided by G142, E157, N172, and N230. Residue N230 coordinates Mg(2+). Residues 233-253 (AQLAEAGRFARQRINRELMLD) are linker. The segment at 254 to 476 (GVTIVDPAAT…DGWKLKQRDQ (223 aa)) is N-acetyltransferase. UDP-N-acetyl-alpha-D-glucosamine contacts are provided by R353 and K371. H383 serves as the catalytic Proton acceptor. Residues Y386 and N397 each coordinate UDP-N-acetyl-alpha-D-glucosamine. Acetyl-CoA-binding positions include 406 to 407 (NY), S425, A443, and R460.

This sequence in the N-terminal section; belongs to the N-acetylglucosamine-1-phosphate uridyltransferase family. It in the C-terminal section; belongs to the transferase hexapeptide repeat family. As to quaternary structure, homotrimer. The cofactor is Mg(2+).

Its subcellular location is the cytoplasm. It catalyses the reaction alpha-D-glucosamine 1-phosphate + acetyl-CoA = N-acetyl-alpha-D-glucosamine 1-phosphate + CoA + H(+). The catalysed reaction is N-acetyl-alpha-D-glucosamine 1-phosphate + UTP + H(+) = UDP-N-acetyl-alpha-D-glucosamine + diphosphate. The protein operates within nucleotide-sugar biosynthesis; UDP-N-acetyl-alpha-D-glucosamine biosynthesis; N-acetyl-alpha-D-glucosamine 1-phosphate from alpha-D-glucosamine 6-phosphate (route II): step 2/2. It participates in nucleotide-sugar biosynthesis; UDP-N-acetyl-alpha-D-glucosamine biosynthesis; UDP-N-acetyl-alpha-D-glucosamine from N-acetyl-alpha-D-glucosamine 1-phosphate: step 1/1. Its pathway is bacterial outer membrane biogenesis; LPS lipid A biosynthesis. Catalyzes the last two sequential reactions in the de novo biosynthetic pathway for UDP-N-acetylglucosamine (UDP-GlcNAc). The C-terminal domain catalyzes the transfer of acetyl group from acetyl coenzyme A to glucosamine-1-phosphate (GlcN-1-P) to produce N-acetylglucosamine-1-phosphate (GlcNAc-1-P), which is converted into UDP-GlcNAc by the transfer of uridine 5-monophosphate (from uridine 5-triphosphate), a reaction catalyzed by the N-terminal domain. The polypeptide is Bifunctional protein GlmU (Geobacter metallireducens (strain ATCC 53774 / DSM 7210 / GS-15)).